We begin with the raw amino-acid sequence, 652 residues long: Carboxypeptidase S1 homolog A (652 aa).

The N-terminal stretch at 1–19 (MRLAASIAVALPVIGAASA) is a signal peptide. A disulfide bridge links C50 with C121. 6 N-linked (GlcNAc...) asparagine glycosylation sites follow: N77, N132, N161, N168, N184, and N202. S238 is a catalytic residue. N260, N299, N347, and N410 each carry an N-linked (GlcNAc...) asparagine glycan. 2 disulfide bridges follow: C325-C361 and C332-C354. D458 is an active-site residue. C461 is a substrate binding site. 3 N-linked (GlcNAc...) asparagine glycosylation sites follow: N474, N492, and N505. Residue H516 is part of the active site. E517 is a binding site for substrate. N594 is a glycosylation site (N-linked (GlcNAc...) asparagine). The segment at 608–628 (AASKGNPPPTTTSSPTASPTA) is disordered. Residues 618–628 (TTSSPTASPTA) show a composition bias toward low complexity. A lipid anchor (GPI-anchor amidated glycine) is attached at G629. Positions 630–652 (SAMLKAPVAMLAISALTVLAFYL) are cleaved as a propeptide — removed in mature form.

The protein belongs to the peptidase S10 family.

The protein localises to the cell membrane. The catalysed reaction is Preferential release of a C-terminal arginine or lysine residue.. In terms of biological role, extracellular serine carboxypeptidase that contributes to pathogenicity. This chain is Carboxypeptidase S1 homolog A (SCPA), found in Arthroderma benhamiae (strain ATCC MYA-4681 / CBS 112371) (Trichophyton mentagrophytes).